The chain runs to 269 residues: Tryptophan synthase alpha chain (269 aa).

Active-site proton acceptor residues include E49 and D60.

Belongs to the TrpA family. In terms of assembly, tetramer of two alpha and two beta chains.

It catalyses the reaction (1S,2R)-1-C-(indol-3-yl)glycerol 3-phosphate + L-serine = D-glyceraldehyde 3-phosphate + L-tryptophan + H2O. The protein operates within amino-acid biosynthesis; L-tryptophan biosynthesis; L-tryptophan from chorismate: step 5/5. The alpha subunit is responsible for the aldol cleavage of indoleglycerol phosphate to indole and glyceraldehyde 3-phosphate. The polypeptide is Tryptophan synthase alpha chain (Photobacterium profundum (strain SS9)).